Consider the following 515-residue polypeptide: Nuclear hormone receptor family member nhr-62 (515 aa).

Positions Asn95–Ser170 form a DNA-binding region, nuclear receptor. 2 NR C4-type zinc fingers span residues Cys98–Cys118 and Cys134–Cys153. Positions Gln169–Pro195 are disordered. One can recognise an NR LBD domain in the interval Glu225 to Gln509. The segment at Ser498–Gln509 is AF-2.

It belongs to the nuclear hormone receptor family. As to expression, widely expressed at a low level in many tissues including the pharynx, sensory neurons, intestine, spermatheca, hypodermis, and excretory cell.

The protein resides in the nucleus. Its function is as follows. Orphan nuclear hormone receptor. Required for metabolic and physiologic responses associated with dietary-restriction-induced longevity. Modulates triglyceride and lipid metabolism and autophagy, associated with dietary-restriction, probably acting via regulation of transcription of target genes. The chain is Nuclear hormone receptor family member nhr-62 (nhr-62) from Caenorhabditis elegans.